The following is a 394-amino-acid chain: 1-deoxy-D-xylulose 5-phosphate reductoisomerase (394 aa).

Residues Thr-12, Gly-13, Ser-14, Ile-15, Gly-38, Asn-41, and Asn-132 each contribute to the NADPH site. Lys-133 provides a ligand contact to 1-deoxy-D-xylulose 5-phosphate. Glu-134 lines the NADPH pocket. Asp-156 lines the Mn(2+) pocket. Positions 157, 158, 182, and 205 each coordinate 1-deoxy-D-xylulose 5-phosphate. Glu-158 contributes to the Mn(2+) binding site. An NADPH-binding site is contributed by Gly-211. 1-deoxy-D-xylulose 5-phosphate contacts are provided by Ser-218, Asn-223, Lys-224, and Glu-227. Glu-227 provides a ligand contact to Mn(2+).

The protein belongs to the DXR family. Mg(2+) serves as cofactor. Requires Mn(2+) as cofactor.

The enzyme catalyses 2-C-methyl-D-erythritol 4-phosphate + NADP(+) = 1-deoxy-D-xylulose 5-phosphate + NADPH + H(+). The protein operates within isoprenoid biosynthesis; isopentenyl diphosphate biosynthesis via DXP pathway; isopentenyl diphosphate from 1-deoxy-D-xylulose 5-phosphate: step 1/6. Functionally, catalyzes the NADPH-dependent rearrangement and reduction of 1-deoxy-D-xylulose-5-phosphate (DXP) to 2-C-methyl-D-erythritol 4-phosphate (MEP). This chain is 1-deoxy-D-xylulose 5-phosphate reductoisomerase, found in Paenarthrobacter aurescens (strain TC1).